The following is a 264-amino-acid chain: PDZ domain-containing protein 9 (264 aa).

In terms of domain architecture, PDZ spans 22–109 (VHNLSKTQQT…GTVLQIKVYR (88 aa)).

In Macaca fascicularis (Crab-eating macaque), this protein is PDZ domain-containing protein 9 (PDZD9).